Reading from the N-terminus, the 86-residue chain is MERNQRKTLYGRVVSDKMDKTITVVVETKRNHPVYGKRINYSKKYKAHDENNVAKEGDIVRIMETRPLSATKRFRLVEVVEEAVII.

This sequence belongs to the universal ribosomal protein uS17 family. In terms of assembly, part of the 30S ribosomal subunit.

Its function is as follows. One of the primary rRNA binding proteins, it binds specifically to the 5'-end of 16S ribosomal RNA. The chain is Small ribosomal subunit protein uS17 from Streptococcus pyogenes serotype M6 (strain ATCC BAA-946 / MGAS10394).